Here is a 609-residue protein sequence, read N- to C-terminus: Non-structural glycoprotein (609 aa).

Positions 1–24 are cleaved as a signal peptide; sequence MDFLRQCTLIQVMILAITIRLTHG. Residues 25–581 are Extracellular-facing; that stretch reads GWTNFPESCV…EKDYWHEEYN (557 aa). N-linked (GlcNAc...) asparagine; by host glycosylation is found at asparagine 87, asparagine 375, asparagine 465, asparagine 472, asparagine 478, asparagine 506, asparagine 529, asparagine 551, and asparagine 562. Residues 582-599 traverse the membrane as a helical segment; the sequence is MWGLSGLSFLLLLALFYN. At 600 to 609 the chain is on the cytoplasmic side; the sequence is KIKRKIKRKS.

It belongs to the ephemerovirus glycoprotein family.

It localises to the membrane. The chain is Non-structural glycoprotein (GNS) from Adelaide River virus (ARV).